A 368-amino-acid chain; its full sequence is Probable staphylococcal-like nuclease CAN2 (368 aa).

Gly2 carries N-myristoyl glycine lipidation. The S-palmitoyl cysteine moiety is linked to residue Cys7. Positions 16 to 56 are disordered; sequence DHYPYYKPTSRPHYQPPHYHGQPAAPPAPLQQQHLGPHGVT. Residues 27-38 show a composition bias toward low complexity; it reads PHYQPPHYHGQP. Positions 168 to 344 constitute a TNase-like domain; the sequence is NTLPVYDKCI…RAANRGLWAS (177 aa). Position 181 (Asp181) interacts with Ca(2+). Arg251 is a catalytic residue. Asp256 provides a ligand contact to Ca(2+). Active-site residues include Glu259 and Arg293.

This sequence belongs to the thermonuclease family. Ca(2+) serves as cofactor.

It is found in the cell membrane. In terms of biological role, enzyme that catalyzes the hydrolysis of both DNA and RNA at the 5' position of the phosphodiester bond. This is Probable staphylococcal-like nuclease CAN2 from Oryza sativa subsp. japonica (Rice).